The sequence spans 122 residues: MLNTLLVVGFGGFIGAILRMLSINLVNKFFPYSISFGTLFVNVLGSFIIGLLFSYAQNKGLSPLLKSFISTGFLGAFTTFSTFSYQNLLLLQSGNYLHFALNIILNVFLCLFAAWLGFLIFK.

4 helical membrane passes run 6-26 (LVVG…INLV), 33-53 (SISF…GLLF), 60-80 (GLSP…FTTF), and 101-121 (LNII…FLIF). Na(+)-binding residues include Gly75 and Thr78.

The protein belongs to the fluoride channel Fluc/FEX (TC 1.A.43) family.

It localises to the cell inner membrane. The catalysed reaction is fluoride(in) = fluoride(out). Its activity is regulated as follows. Na(+) is not transported, but it plays an essential structural role and its presence is essential for fluoride channel function. Its function is as follows. Fluoride-specific ion channel. Important for reducing fluoride concentration in the cell, thus reducing its toxicity. The protein is Fluoride-specific ion channel FluC of Campylobacter jejuni subsp. jejuni serotype O:2 (strain ATCC 700819 / NCTC 11168).